We begin with the raw amino-acid sequence, 673 residues long: Protein-arginine deiminase type-2 (673 aa).

Residue M1 is modified to N-acetylmethionine. The Ca(2+) site is built by D131, D133, D135, E139, N162, D164, D166, D174, D177, K179, D185, and D188. At R352 the chain carries Citrulline. Ca(2+) contacts are provided by E362, D397, F416, L419, and E420. C655 functions as the Nucleophile in the catalytic mechanism.

This sequence belongs to the protein arginine deiminase family. As to quaternary structure, homodimer. Ca(2+) serves as cofactor. In terms of tissue distribution, expressed in various tissues including muscle, uterus, spinal cord, salivary gland and pancreas.

The protein resides in the cytoplasm. It carries out the reaction L-arginyl-[protein] + H2O = L-citrullyl-[protein] + NH4(+). Its function is as follows. Catalyzes the deimination of arginine residues of proteins. The sequence is that of Protein-arginine deiminase type-2 (Padi2) from Mus musculus (Mouse).